We begin with the raw amino-acid sequence, 114 residues long: Large ribosomal subunit protein bL20c (114 aa).

Belongs to the bacterial ribosomal protein bL20 family.

The protein localises to the plastid. The protein resides in the chloroplast. Its function is as follows. Binds directly to 23S ribosomal RNA and is necessary for the in vitro assembly process of the 50S ribosomal subunit. It is not involved in the protein synthesizing functions of that subunit. This Tetradesmus obliquus (Green alga) protein is Large ribosomal subunit protein bL20c.